The following is a 418-amino-acid chain: Glutamyl-tRNA reductase (418 aa).

Substrate contacts are provided by residues 49–52 (TCNR), Ser109, 114–116 (EPQ), and Gln120. The active-site Nucleophile is Cys50. 189 to 194 (GAGETI) is a binding site for NADP(+).

The protein belongs to the glutamyl-tRNA reductase family. Homodimer.

The catalysed reaction is (S)-4-amino-5-oxopentanoate + tRNA(Glu) + NADP(+) = L-glutamyl-tRNA(Glu) + NADPH + H(+). It participates in porphyrin-containing compound metabolism; protoporphyrin-IX biosynthesis; 5-aminolevulinate from L-glutamyl-tRNA(Glu): step 1/2. In terms of biological role, catalyzes the NADPH-dependent reduction of glutamyl-tRNA(Glu) to glutamate 1-semialdehyde (GSA). The polypeptide is Glutamyl-tRNA reductase (Salmonella dublin (strain CT_02021853)).